A 623-amino-acid chain; its full sequence is Indolepyruvate oxidoreductase subunit IorA (623 aa).

C573, C576, C579, C585, C602, C605, C608, and C612 together coordinate [4Fe-4S] cluster. Positions 593–622 constitute a 4Fe-4S ferredoxin-type domain; it reads EKVSIDQSLCVGCAVCAKICPNRAIKPAKS.

In terms of assembly, heterodimer of the IorA and IorB subunits. The cofactor is [4Fe-4S] cluster.

The catalysed reaction is indole-3-pyruvate + 2 oxidized [2Fe-2S]-[ferredoxin] + CoA = (indol-3-yl)acetyl-CoA + 2 reduced [2Fe-2S]-[ferredoxin] + CO2 + H(+). Functionally, catalyzes the ferredoxin-dependent oxidative decarboxylation of arylpyruvates. This is Indolepyruvate oxidoreductase subunit IorA (iorA) from Archaeoglobus fulgidus (strain ATCC 49558 / DSM 4304 / JCM 9628 / NBRC 100126 / VC-16).